Consider the following 171-residue polypeptide: Ribosome maturation factor RimP (171 aa).

Belongs to the RimP family.

The protein localises to the cytoplasm. In terms of biological role, required for maturation of 30S ribosomal subunits. In Anaeromyxobacter dehalogenans (strain 2CP-1 / ATCC BAA-258), this protein is Ribosome maturation factor RimP.